The chain runs to 404 residues: Keratin, type I cuticular Ha3-I (404 aa).

The tract at residues 1–56 is head; sequence MSYSCGLPSLSCRTSCSSRPCVPPSCHGCTLPGACNIPANVSNCNWFCEGSFNGSE. The IF rod domain maps to 56-367; sequence EKETMQFLND…SLLESEDCKL (312 aa). Residues 57 to 91 are coil 1A; the sequence is KETMQFLNDRLASYLEKVRQLERDNAELENLIRER. The interval 92 to 102 is linker 1; it reads SQQQEPLVCAS. The interval 103 to 203 is coil 1B; the sequence is YQSYFKTIEE…HEQEVNTLRC (101 aa). The segment at 204–219 is linker 12; the sequence is QLGDRLNVEVDAAPTV. The tract at residues 220–363 is coil 2; the sequence is DLNQVLNETR…NTYRSLLESE (144 aa). Residues 364-404 are tail; that stretch reads DCKLPSNPCATTNACDKSTGPCISNPCGLRARCGPCNTFGY.

The protein belongs to the intermediate filament family. In terms of tissue distribution, expressed in the hair follicles.

In Homo sapiens (Human), this protein is Keratin, type I cuticular Ha3-I (KRT33A).